A 199-amino-acid polypeptide reads, in one-letter code: NAD(P)H dehydrogenase (quinone) (199 aa).

Positions 4 to 190 constitute a Flavodoxin-like domain; sequence MLVLYYSAYG…DGARFQGRRV (187 aa). FMN is bound by residues 10-15 and 78-80; these read SAYGYM and TRY. Y12 is a binding site for NAD(+). Position 98 (W98) interacts with substrate. FMN is bound by residues 113–119 and H134; that span reads STATQHG. Positions 157–181 are disordered; it reads GGAPYGMTTTADGDGSRQPSAQELD. Residues 163-177 show a composition bias toward polar residues; sequence MTTTADGDGSRQPSA.

It belongs to the WrbA family. It depends on FMN as a cofactor.

It catalyses the reaction a quinone + NADH + H(+) = a quinol + NAD(+). It carries out the reaction a quinone + NADPH + H(+) = a quinol + NADP(+). The sequence is that of NAD(P)H dehydrogenase (quinone) from Brucella melitensis biotype 2 (strain ATCC 23457).